The sequence spans 294 residues: Protoheme IX farnesyltransferase (294 aa).

Helical transmembrane passes span 24–44 (VVLL…PGWV), 48–68 (LIAF…AINH), 96–116 (ALWF…LFVN), 118–138 (LTAL…TGYL), 145–165 (NIVI…TAVT), 172–192 (ALLL…ALAI), 224–244 (VLLL…WIYL), 245–265 (LGAL…YFTD), and 268–288 (VVAM…FVFL).

This sequence belongs to the UbiA prenyltransferase family. Protoheme IX farnesyltransferase subfamily.

Its subcellular location is the cell inner membrane. The catalysed reaction is heme b + (2E,6E)-farnesyl diphosphate + H2O = Fe(II)-heme o + diphosphate. The protein operates within porphyrin-containing compound metabolism; heme O biosynthesis; heme O from protoheme: step 1/1. Functionally, converts heme B (protoheme IX) to heme O by substitution of the vinyl group on carbon 2 of heme B porphyrin ring with a hydroxyethyl farnesyl side group. The chain is Protoheme IX farnesyltransferase from Legionella pneumophila (strain Corby).